Here is a 481-residue protein sequence, read N- to C-terminus: Beta-amyrin 16-beta-monooxygenase (481 aa).

The chain crosses the membrane as a helical span at residues leucine 4–leucine 24. Cysteine 428 serves as a coordination point for heme.

Belongs to the cytochrome P450 family. Heme is required as a cofactor. In terms of tissue distribution, highly expressed in roots. Expressed at very low levels in leaves and petals.

It localises to the membrane. The catalysed reaction is beta-amyrin + reduced [NADPH--hemoprotein reductase] + O2 = maniladiol + oxidized [NADPH--hemoprotein reductase] + H2O + H(+). It catalyses the reaction oleanolate + reduced [NADPH--hemoprotein reductase] + O2 = cochalate + oxidized [NADPH--hemoprotein reductase] + H2O + H(+). Involved in triterpenoid saponin biosynthesis in roots. Catalyzes the hydroxylation of beta-amyrin at the C-16 beta position to form maniladiol. Is also able to oxidize oleanolat to cochalate. Has weak activity catalyzing the three-step oxidation at C-28 of beta-amyrin to form oleanolate. The chain is Beta-amyrin 16-beta-monooxygenase from Platycodon grandiflorus (Balloon flower).